A 294-amino-acid chain; its full sequence is Cytidine deaminase (294 aa).

CMP/dCMP-type deaminase domains lie at 48–168 and 186–294; these read DEDA…FGPK and LEGD…VLLG. Position 89-91 (89-91) interacts with substrate; it reads NME. H102 lines the Zn(2+) pocket. The Proton donor role is filled by E104. Zn(2+)-binding residues include C129 and C132.

Belongs to the cytidine and deoxycytidylate deaminase family. Homodimer. The cofactor is Zn(2+).

The enzyme catalyses cytidine + H2O + H(+) = uridine + NH4(+). The catalysed reaction is 2'-deoxycytidine + H2O + H(+) = 2'-deoxyuridine + NH4(+). In terms of biological role, this enzyme scavenges exogenous and endogenous cytidine and 2'-deoxycytidine for UMP synthesis. The chain is Cytidine deaminase from Citrobacter koseri (strain ATCC BAA-895 / CDC 4225-83 / SGSC4696).